Here is a 192-residue protein sequence, read N- to C-terminus: Casparian strip membrane protein 1 (192 aa).

The Cytoplasmic segment spans residues 1-26 (MTKSVRLEEGDASKVLVPVGSNKGVS). The helical transmembrane segment at 27-47 (VMDLVLRLVGIAGTLGAAIAM) threads the bilayer. Residues 48–75 (GTNEQTLPFFTRFVVFNAEYDDFRSFRL) lie on the Extracellular side of the membrane. The helical transmembrane segment at 76–96 (FVIVNAIVCAYFVLTLPLSIV) threads the bilayer. Residues 97–107 (HIMRSAARGSR) lie on the Cytoplasmic side of the membrane. Residues 108–128 (ILLIIMDTVMLALLTAGASAA) form a helical membrane-spanning segment. The Extracellular portion of the chain corresponds to 129–161 (ASIVYLAHNGNTSTNWLPVCQQYGDFCQGASGS). N-linked (GlcNAc...) asparagine glycosylation occurs at N139. The chain crosses the membrane as a helical span at residues 162 to 182 (LIGSFGAVVVFILIILLGAIA). The Cytoplasmic segment spans residues 183–192 (LSRHAKRVVL).

This sequence belongs to the Casparian strip membrane proteins (CASP) family. As to quaternary structure, homodimer and heterodimers.

It localises to the cell membrane. Functionally, regulates membrane-cell wall junctions and localized cell wall deposition. Required for establishment of the Casparian strip membrane domain (CSD) and the subsequent formation of Casparian strips, a cell wall modification of the root endodermis that determines an apoplastic barrier between the intraorganismal apoplasm and the extraorganismal apoplasm and prevents lateral diffusion. The chain is Casparian strip membrane protein 1 from Lactuca saligna (Willowleaf lettuce).